Here is a 270-residue protein sequence, read N- to C-terminus: Acyl-[acyl-carrier-protein]--UDP-N-acetylglucosamine O-acyltransferase (270 aa).

The protein belongs to the transferase hexapeptide repeat family. LpxA subfamily. As to quaternary structure, homotrimer.

Its subcellular location is the cytoplasm. The catalysed reaction is a (3R)-hydroxyacyl-[ACP] + UDP-N-acetyl-alpha-D-glucosamine = a UDP-3-O-[(3R)-3-hydroxyacyl]-N-acetyl-alpha-D-glucosamine + holo-[ACP]. Its pathway is glycolipid biosynthesis; lipid IV(A) biosynthesis; lipid IV(A) from (3R)-3-hydroxytetradecanoyl-[acyl-carrier-protein] and UDP-N-acetyl-alpha-D-glucosamine: step 1/6. Involved in the biosynthesis of lipid A, a phosphorylated glycolipid that anchors the lipopolysaccharide to the outer membrane of the cell. This is Acyl-[acyl-carrier-protein]--UDP-N-acetylglucosamine O-acyltransferase from Helicobacter pylori (strain J99 / ATCC 700824) (Campylobacter pylori J99).